Consider the following 85-residue polypeptide: Large ribosomal subunit protein bL27 (85 aa).

The segment at 1–24 (MAHKKAGGSSRNGRDSHSKRLGVK) is disordered.

This sequence belongs to the bacterial ribosomal protein bL27 family.

This Nitrosomonas eutropha (strain DSM 101675 / C91 / Nm57) protein is Large ribosomal subunit protein bL27.